We begin with the raw amino-acid sequence, 350 residues long: MIPSERVGIVGYGAYVPRYRIKAEEIAAVWGDDVDSIKSGLMIEEKSVPSETEDSATIAVEAAKNAVARAEIDPKDIGAIYVGSESPPYAVKPTATIVAAAIGATPDLTAADYEFACKAGTAAIQTCAGLVASGMIKYGLAIGADTAQGAPGDPLEYTAAAGGAAFVIGRKKLVAEMEGTYSYTTDTPDFWRREGQPYPRHGGRFTGAPAYFKHIIRAARGLMEELDLSPEDFDYAVFHQPNGKFPRKVARSLGFEPEQVEPTIVVDRVGNTYSGSSLLGFTAALDRAEPGDRILVVSYGSGAGSDAFSFVVTERIEEVREKAPLLEEYLEDRVYVTYGEYAKMKKKLKF.

(3S)-3-hydroxy-3-methylglutaryl-CoA-binding residues include aspartate 33 and valine 34. Glutamate 85 functions as the Proton donor/acceptor in the catalytic mechanism. Residues cysteine 117 and threonine 158 each contribute to the (3S)-3-hydroxy-3-methylglutaryl-CoA site. The active-site Acyl-thioester intermediate is the cysteine 117. Arginine 204 is a binding site for CoA. Residues threonine 206 and histidine 239 each coordinate (3S)-3-hydroxy-3-methylglutaryl-CoA. Histidine 239 serves as the catalytic Proton donor/acceptor. Residue lysine 244 coordinates CoA. Residues lysine 248, asparagine 271, and serine 301 each contribute to the (3S)-3-hydroxy-3-methylglutaryl-CoA site.

The protein belongs to the thiolase-like superfamily. Archaeal HMG-CoA synthase family. As to quaternary structure, interacts with acetoacetyl-CoA thiolase that catalyzes the precedent step in the pathway and with a DUF35 protein. The acetoacetyl-CoA thiolase/HMG-CoA synthase complex channels the intermediate via a fused CoA-binding site, which allows for efficient coupling of the endergonic thiolase reaction with the exergonic HMGCS reaction.

The catalysed reaction is acetoacetyl-CoA + acetyl-CoA + H2O = (3S)-3-hydroxy-3-methylglutaryl-CoA + CoA + H(+). The protein operates within metabolic intermediate biosynthesis; (R)-mevalonate biosynthesis; (R)-mevalonate from acetyl-CoA: step 2/3. In terms of biological role, catalyzes the condensation of acetyl-CoA with acetoacetyl-CoA to form 3-hydroxy-3-methylglutaryl-CoA (HMG-CoA). Functions in the mevalonate (MVA) pathway leading to isopentenyl diphosphate (IPP), a key precursor for the biosynthesis of isoprenoid compounds that are building blocks of archaeal membrane lipids. This chain is Hydroxymethylglutaryl-CoA synthase, found in Methanopyrus kandleri (strain AV19 / DSM 6324 / JCM 9639 / NBRC 100938).